We begin with the raw amino-acid sequence, 581 residues long: Arginine--tRNA ligase (581 aa).

Residues 131-141 (ANPTGPMHVGH) carry the 'HIGH' region motif.

Belongs to the class-I aminoacyl-tRNA synthetase family. Monomer.

It is found in the cytoplasm. It carries out the reaction tRNA(Arg) + L-arginine + ATP = L-arginyl-tRNA(Arg) + AMP + diphosphate. This is Arginine--tRNA ligase from Paracoccus denitrificans (strain Pd 1222).